Here is a 111-residue protein sequence, read N- to C-terminus: Large ribosomal subunit protein uL22 (111 aa).

This sequence belongs to the universal ribosomal protein uL22 family. In terms of assembly, part of the 50S ribosomal subunit.

Its function is as follows. This protein binds specifically to 23S rRNA; its binding is stimulated by other ribosomal proteins, e.g. L4, L17, and L20. It is important during the early stages of 50S assembly. It makes multiple contacts with different domains of the 23S rRNA in the assembled 50S subunit and ribosome. Functionally, the globular domain of the protein is located near the polypeptide exit tunnel on the outside of the subunit, while an extended beta-hairpin is found that lines the wall of the exit tunnel in the center of the 70S ribosome. In Chlamydia pneumoniae (Chlamydophila pneumoniae), this protein is Large ribosomal subunit protein uL22.